A 181-amino-acid chain; its full sequence is uncharacterized protein (181 aa).

Positions 162 to 181 (QARGPAGTRTPQRRCSSHEA) are disordered.

This is an uncharacterized protein from Homo sapiens (Human).